The sequence spans 412 residues: Multifunctional CCA protein (412 aa).

Gly8 and Arg11 together coordinate ATP. CTP-binding residues include Gly8 and Arg11. Residues Asp21 and Asp23 each contribute to the Mg(2+) site. Positions 91, 137, and 140 each coordinate ATP. Arg91, Arg137, and Arg140 together coordinate CTP. Residues 228–329 (TGIHTLMTLS…VKLFDSIDAW (102 aa)) enclose the HD domain.

Belongs to the tRNA nucleotidyltransferase/poly(A) polymerase family. Bacterial CCA-adding enzyme type 1 subfamily. As to quaternary structure, monomer. Can also form homodimers and oligomers. Requires Mg(2+) as cofactor. The cofactor is Ni(2+).

The catalysed reaction is a tRNA precursor + 2 CTP + ATP = a tRNA with a 3' CCA end + 3 diphosphate. It carries out the reaction a tRNA with a 3' CCA end + 2 CTP + ATP = a tRNA with a 3' CCACCA end + 3 diphosphate. Its function is as follows. Catalyzes the addition and repair of the essential 3'-terminal CCA sequence in tRNAs without using a nucleic acid template. Adds these three nucleotides in the order of C, C, and A to the tRNA nucleotide-73, using CTP and ATP as substrates and producing inorganic pyrophosphate. tRNA 3'-terminal CCA addition is required both for tRNA processing and repair. Also involved in tRNA surveillance by mediating tandem CCA addition to generate a CCACCA at the 3' terminus of unstable tRNAs. While stable tRNAs receive only 3'-terminal CCA, unstable tRNAs are marked with CCACCA and rapidly degraded. The protein is Multifunctional CCA protein of Escherichia coli O127:H6 (strain E2348/69 / EPEC).